The primary structure comprises 90 residues: Antitoxin VapB35 (90 aa).

The tract at residues 53–90 is disordered; that stretch reads GSVQPARVHGPAPRPTIPMRGGLDSGTLLERMRAEERY.

This sequence belongs to the phD/YefM antitoxin family.

Antitoxin component of a type II toxin-antitoxin (TA) system. Neutralizes the effect of cognate toxin VapC35. The sequence is that of Antitoxin VapB35 (vapB35) from Mycobacterium tuberculosis (strain CDC 1551 / Oshkosh).